A 431-amino-acid chain; its full sequence is MGKNVVVLGTQWGDEGKGKIVDLLTEQAKYVVRYQGGHNAGHTLVIDGEKTVLHLIPSGILRDNVKCIIGNGVVVAPDALMKEINMLKGRGVPVEERLLISEACPLILPFHCALDIAREKARGNQAIGTTGRGIGPAYEDKVSRRGLRIGDLFNAELFATKLQEVMKYHNFMLTEYYKVEAVDYQQTLDDALAIADYLKSMCTDVSEMLDVARKAGEPILFEGAQGTLLDIDHGTYPFVTSSNTTAGGVATGSGFGPRHLDYVLGIMKAYTTRVGAGPFPTELANEIGDYIGEKGQEFGATTGRKRRPGWLDAVAMRRAVQINSVSGFCLTKLDVLDGLKEVKICVGYQYADGTVSKVTPLAAEGYDLVTPIYETMPGWSETTFGATTIEQLPPAAINYIKRLEELLETPIDIISTGPDRNETMILVNPFK.

GTP contacts are provided by residues Gly13–Lys19 and Gly41–Thr43. Asp14 (proton acceptor) is an active-site residue. Positions 14 and 41 each coordinate Mg(2+). Residues Asp14–Lys17, Asn39–His42, Thr130, Arg144, Gln225, Thr240, and Arg304 each bind IMP. Residue His42 is the Proton donor of the active site. Ala300–Arg306 is a binding site for substrate. GTP contacts are provided by residues Arg306, Lys332 to Asp334, and Ser415 to Gly417.

This sequence belongs to the adenylosuccinate synthetase family. In terms of assembly, homodimer. Requires Mg(2+) as cofactor.

Its subcellular location is the cytoplasm. The catalysed reaction is IMP + L-aspartate + GTP = N(6)-(1,2-dicarboxyethyl)-AMP + GDP + phosphate + 2 H(+). It participates in purine metabolism; AMP biosynthesis via de novo pathway; AMP from IMP: step 1/2. Functionally, plays an important role in the de novo pathway of purine nucleotide biosynthesis. Catalyzes the first committed step in the biosynthesis of AMP from IMP. This is Adenylosuccinate synthetase from Shewanella frigidimarina (strain NCIMB 400).